The following is a 388-amino-acid chain: Alpha-2A adrenergic receptor (388 aa).

The Extracellular portion of the chain corresponds to 1-22 (MICGANATNGTNATKEYTLLVA). Asn-6, Asn-9, and Asn-12 each carry an N-linked (GlcNAc...) asparagine glycan. A helical membrane pass occupies residues 23–48 (LPLSIAVGLLILLIIFGNVLVIIAVF). At 49–59 (TSRALRAPQNL) the chain is on the cytoplasmic side. Residues 60-85 (FLVSLASADILVATLVMPFSLANELM) traverse the membrane as a helical segment. Residues 86–95 (GMWTFGGVWC) are Extracellular-facing. Cys-95 and Cys-169 are disulfide-bonded. The chain crosses the membrane as a helical span at residues 96–118 (EIYLALDVLFCTASITHLCAISL). Residues 119–138 (DRYWSITQAIEYNLKRTPQR) are Cytoplasmic-facing. The helical transmembrane segment at 139–162 (IKRIIFIVWIIAAVISCPPLITMK) threads the bilayer. Residues 163-173 (KSEGDICDINK) are Extracellular-facing. A helical transmembrane segment spans residues 174-198 (EKWYIVSSCIGSFFLPCIIMVLVYI). Residues 199 to 311 (RIYQIAKKRT…RQNREKRFTF (113 aa)) are Cytoplasmic-facing. The disordered stretch occupies residues 208-291 (TRAPPGDHRK…PGDGDKTEAC (84 aa)). Residues 212-231 (PGDHRKNEVGKKENDPHEKL) show a composition bias toward basic and acidic residues. A compositionally biased stretch (basic residues) spans 266 to 275 (LKKKSSKGKT). The helical transmembrane segment at 312-337 (VLAVVIGVFVICWFPFFFTYTFTAFC) threads the bilayer. The Extracellular segment spans residues 338-344 (DCCVPET). A helical membrane pass occupies residues 345 to 368 (LFKFFFWFGYCNSSLNPIIYTIFN). At 369–388 (NDFRRSFKKILCRRDKRRVV) the chain is on the cytoplasmic side. The S-palmitoyl cysteine moiety is linked to residue Cys-380.

It belongs to the G-protein coupled receptor 1 family. Adrenergic receptor subfamily. ADRA2A sub-subfamily.

The protein resides in the cell membrane. Alpha-2 adrenergic receptors mediate the catecholamine-induced inhibition of adenylate cyclase through the action of G proteins. The order of potency for this receptor is dexmedetomidine &gt; oxymetazoline = epinephrine &gt; norepinephrine. This is Alpha-2A adrenergic receptor from Danio rerio (Zebrafish).